A 70-amino-acid chain; its full sequence is Conotoxin AbVIB (70 aa).

An N-terminal signal peptide occupies residues 1-17; it reads VIIIAVLFLTACQLTTA. The propeptide occupies 18 to 41; sequence ETSSRGKQKHRALRSTDKNSKLTR. Residues 20–41 are disordered; the sequence is SSRGKQKHRALRSTDKNSKLTR. Cystine bridges form between Cys-43-Cys-57, Cys-50-Cys-61, and Cys-56-Cys-68.

This sequence belongs to the conotoxin O1 superfamily. Expressed by the venom duct.

The protein localises to the secreted. This chain is Conotoxin AbVIB, found in Conus abbreviatus (Abbreviated cone).